A 65-amino-acid chain; its full sequence is SCOCO-like protein 1 (65 aa).

Residues 8-44 are a coiled coil; sequence RSLMEQKAMELQQQLQALLDEIDQNKQESENISRESE.

It belongs to the SLO1 family.

This chain is SCOCO-like protein 1, found in Schizosaccharomyces pombe (strain 972 / ATCC 24843) (Fission yeast).